Reading from the N-terminus, the 452-residue chain is MLDITTLRKDLDSVIARLETRKSPQAFLNVDTFRTLEAERKTIQMRTEELQGKRNTLSKQIGQLKAKGAAGQAESDAVMAEVAGLKAELETSATRLEQIQLELQALLLGVPNLPHESVPVGADEHGNVVVRSWSPDGKGPKAFDFEVKDHVDIGTPLGLDFELGVKLTGARFTVMKGLIARLHRALAQFMLDVQTQEHGYTECYTPYIVNAQSMRGTGQLPKFEADLFAAKKGGQEAEAAPDNSALYLIPTSEVPLTNFVRDVVLAEAELPVKLTAHTPCFRSEAGSAGRDTRGLIRQHQFDKVEMVQIVHPDKSYETLEQMTGHAEAILQKLGLPYRVMSLCTGDMGFGASKTYDLEVWLPAQNTYREISSVSNCEAFQARRLQARFKNAQGKNELVHTLNGSGLAVGRALVAVLENYQNADGSVTVPQALRPYVGGQKVLGATAMNDMDM.

Residue 251 to 253 (TSE) coordinates L-serine. 282 to 284 (RSE) is an ATP binding site. Glutamate 305 is a binding site for L-serine. 369-372 (EISS) is an ATP binding site. Position 404 (serine 404) interacts with L-serine.

This sequence belongs to the class-II aminoacyl-tRNA synthetase family. Type-1 seryl-tRNA synthetase subfamily. Homodimer. The tRNA molecule binds across the dimer.

The protein resides in the cytoplasm. It carries out the reaction tRNA(Ser) + L-serine + ATP = L-seryl-tRNA(Ser) + AMP + diphosphate + H(+). It catalyses the reaction tRNA(Sec) + L-serine + ATP = L-seryl-tRNA(Sec) + AMP + diphosphate + H(+). Its pathway is aminoacyl-tRNA biosynthesis; selenocysteinyl-tRNA(Sec) biosynthesis; L-seryl-tRNA(Sec) from L-serine and tRNA(Sec): step 1/1. Functionally, catalyzes the attachment of serine to tRNA(Ser). Is also able to aminoacylate tRNA(Sec) with serine, to form the misacylated tRNA L-seryl-tRNA(Sec), which will be further converted into selenocysteinyl-tRNA(Sec). In Albidiferax ferrireducens (strain ATCC BAA-621 / DSM 15236 / T118) (Rhodoferax ferrireducens), this protein is Serine--tRNA ligase.